The following is a 387-amino-acid chain: GTPase Obg (387 aa).

The region spanning 1 to 159 is the Obg domain; the sequence is MKFLDEAKIY…MWVRLEMKLL (159 aa). Residues 160-334 form the OBG-type G domain; that stretch reads ADVGLVGMPN…LVYHVGGMVK (175 aa). GTP is bound by residues 166–173, 191–195, 213–216, 283–286, and 315–317; these read GMPNAGKS, FTTLQ, DIPG, SKAD, and SSA. The Mg(2+) site is built by Ser173 and Thr193. The segment at 347 to 379 is disordered; that stretch reads LEDAPTRAGSKALRDEHAPSWQDDDDDDDDDDG. Residues 368 to 379 show a composition bias toward acidic residues; it reads QDDDDDDDDDDG.

Belongs to the TRAFAC class OBG-HflX-like GTPase superfamily. OBG GTPase family. Monomer. The cofactor is Mg(2+).

The protein resides in the cytoplasm. An essential GTPase which binds GTP, GDP and possibly (p)ppGpp with moderate affinity, with high nucleotide exchange rates and a fairly low GTP hydrolysis rate. Plays a role in control of the cell cycle, stress response, ribosome biogenesis and in those bacteria that undergo differentiation, in morphogenesis control. The chain is GTPase Obg from Magnetococcus marinus (strain ATCC BAA-1437 / JCM 17883 / MC-1).